Consider the following 535-residue polypeptide: MSKLDLTKYGILNATEIIHNPSYEFLFEEETKAGLEGFEKGQLTELGAVNVMTGVYTGRSPKDKFFVMDDTTKNTIWWTSDEYKNDNKPVTPEAWKSIKKLAVEQLSGKRLFVVDTFCGANESSRLKIRFIMEVAWQAHFVKNMFIRPTEEELANYGEPDFVVMTASKAKVENYKELGLNSETAVVFNLTEKVQVILNTWYGGEMKKGMFSYMNYLLPLRGMASMHCSANTSMDEKETAIFFGLSGTGKTTLSTDPKRKLIGDDEHGWDKDGIFNFEGGCYAKVINLSRENEPDIYNAIRRNALLENVTVDAAGKIDFGDKSVTENTRVSYPIYHIENIVKPVSKAGHAKKVIFLSADAFGVLPPVSILTPEQTKYYFLSGFTAKLAGTERGITEPTPTFSACFGAAFLSLHPTKYAEELVKKMEMVGATAYLVNTGWNGTGKRISIKDTRGIIDAILDGSIDKAPTKAIPFFDFKVPTALPGVDPNILDPRDTYADAAEWTTKAKDLAERFIKNFVKFTGNDAGKALVAAGPKL.

Positions 59, 201, and 207 each coordinate substrate. Residues Lys-207, His-226, and 243 to 251 (GLSGTGKTT) contribute to the ATP site. The Mn(2+) site is built by Lys-207 and His-226. Residue Asp-264 participates in Mn(2+) binding. ATP is bound by residues Glu-292, Arg-328, 444-445 (RI), and Thr-450. Residue Arg-328 coordinates substrate.

It belongs to the phosphoenolpyruvate carboxykinase (ATP) family. Mn(2+) is required as a cofactor.

The protein resides in the cytoplasm. The enzyme catalyses oxaloacetate + ATP = phosphoenolpyruvate + ADP + CO2. The protein operates within carbohydrate biosynthesis; gluconeogenesis. In terms of biological role, involved in the gluconeogenesis. Catalyzes the conversion of oxaloacetate (OAA) to phosphoenolpyruvate (PEP) through direct phosphoryl transfer between the nucleoside triphosphate and OAA. This Porphyromonas gingivalis (strain ATCC BAA-308 / W83) protein is Phosphoenolpyruvate carboxykinase (ATP).